Reading from the N-terminus, the 272-residue chain is B3 domain-containing protein Os10g0323000 (272 aa).

Positions 39–132 (RYGENRKHGQ…TLDLLILDKH (94 aa)) form a DNA-binding region, TF-B3 1. Residues 139-171 (PPSKRDLKLKSKRSTHQDSKGHPSNTDPGPSRI) are disordered. Positions 141-159 (SKRDLKLKSKRSTHQDSKG) are enriched in basic and acidic residues. The TF-B3 2 DNA-binding region spans 180–272 (ESSANTQLLV…THLGVIVDIF (93 aa)).

Its subcellular location is the nucleus. The polypeptide is B3 domain-containing protein Os10g0323000 (Oryza sativa subsp. japonica (Rice)).